The sequence spans 353 residues: Photosystem II protein D1 (353 aa).

The residue at position 2 (Thr2) is an N-acetylthreonine. Thr2 carries the phosphothreonine modification. Helical transmembrane passes span Tyr29–Ser46, His118–Leu133, and Trp142–Ala156. Position 118 (His118) interacts with chlorophyll a. Tyr126 contributes to the pheophytin a binding site. 2 residues coordinate [CaMn4O5] cluster: Asp170 and Glu189. A helical transmembrane segment spans residues Phe197–Leu218. A chlorophyll a-binding site is contributed by His198. A quinone contacts are provided by residues His215 and Ser264–Phe265. Fe cation is bound at residue His215. His272 is a Fe cation binding site. The helical transmembrane segment at Phe274–Leu288 threads the bilayer. The [CaMn4O5] cluster site is built by His332, Glu333, Asp342, and Ala344. Residues Ser345 to Gly353 constitute a propeptide that is removed on maturation.

Belongs to the reaction center PufL/M/PsbA/D family. In terms of assembly, PSII is composed of 1 copy each of membrane proteins PsbA, PsbB, PsbC, PsbD, PsbE, PsbF, PsbH, PsbI, PsbJ, PsbK, PsbL, PsbM, PsbT, PsbX, PsbY, PsbZ, Psb30/Ycf12, at least 3 peripheral proteins of the oxygen-evolving complex and a large number of cofactors. It forms dimeric complexes. Requires The D1/D2 heterodimer binds P680, chlorophylls that are the primary electron donor of PSII, and subsequent electron acceptors. It shares a non-heme iron and each subunit binds pheophytin, quinone, additional chlorophylls, carotenoids and lipids. D1 provides most of the ligands for the Mn4-Ca-O5 cluster of the oxygen-evolving complex (OEC). There is also a Cl(-1) ion associated with D1 and D2, which is required for oxygen evolution. The PSII complex binds additional chlorophylls, carotenoids and specific lipids. as cofactor. In terms of processing, tyr-161 forms a radical intermediate that is referred to as redox-active TyrZ, YZ or Y-Z. C-terminally processed by CTPA; processing is essential to allow assembly of the oxygen-evolving complex and thus photosynthetic growth.

The protein resides in the plastid. The protein localises to the chloroplast thylakoid membrane. It catalyses the reaction 2 a plastoquinone + 4 hnu + 2 H2O = 2 a plastoquinol + O2. Functionally, photosystem II (PSII) is a light-driven water:plastoquinone oxidoreductase that uses light energy to abstract electrons from H(2)O, generating O(2) and a proton gradient subsequently used for ATP formation. It consists of a core antenna complex that captures photons, and an electron transfer chain that converts photonic excitation into a charge separation. The D1/D2 (PsbA/PsbD) reaction center heterodimer binds P680, the primary electron donor of PSII as well as several subsequent electron acceptors. This chain is Photosystem II protein D1, found in Psilotum nudum (Whisk fern).